The following is a 90-amino-acid chain: DNA/RNA-binding protein Alba (90 aa).

Lys8 carries the N6-acetyllysine modification.

This sequence belongs to the histone-like Alba family. Post-translationally, acetylated. Acetylation at Lys-8 decreases DNA-binding affinity.

It is found in the cytoplasm. The protein resides in the chromosome. Its function is as follows. Binds double-stranded DNA tightly but without sequence specificity. Involved in DNA compaction. In Nanoarchaeum equitans (strain Kin4-M), this protein is DNA/RNA-binding protein Alba.